Reading from the N-terminus, the 504-residue chain is D-alanine--D-alanyl carrier protein ligase (504 aa).

Position 152–153 (152–153 (TS)) interacts with ATP. A D-alanine-binding site is contributed by D197. 292-297 (NTYGPT) serves as a coordination point for ATP. V301 is a binding site for D-alanine. ATP-binding positions include D383, 394-397 (YNGR), and K492. K492 is a D-alanine binding site.

This sequence belongs to the ATP-dependent AMP-binding enzyme family. DltA subfamily.

It is found in the cytoplasm. It catalyses the reaction holo-[D-alanyl-carrier protein] + D-alanine + ATP = D-alanyl-[D-alanyl-carrier protein] + AMP + diphosphate. It functions in the pathway cell wall biogenesis; lipoteichoic acid biosynthesis. Functionally, catalyzes the first step in the D-alanylation of lipoteichoic acid (LTA), the activation of D-alanine and its transfer onto the D-alanyl carrier protein (Dcp) DltC. In an ATP-dependent two-step reaction, forms a high energy D-alanyl-AMP intermediate, followed by transfer of the D-alanyl residue as a thiol ester to the phosphopantheinyl prosthetic group of the Dcp. D-alanylation of LTA plays an important role in modulating the properties of the cell wall in Gram-positive bacteria, influencing the net charge of the cell wall. The chain is D-alanine--D-alanyl carrier protein ligase from Bacillus cereus (strain Q1).